The following is a 918-amino-acid chain: Valine--tRNA ligase (918 aa).

Residues 50–60 carry the 'HIGH' region motif; it reads PNVTGSLHMGH. A 'KMSKS' region motif is present at residues 548–552; it reads KMSKS. Lysine 551 provides a ligand contact to ATP. Residues 849-883 adopt a coiled-coil conformation; sequence NDFVNLEALKDRLTKDLKKVNSDIETLNKRISNKN.

This sequence belongs to the class-I aminoacyl-tRNA synthetase family. ValS type 1 subfamily. In terms of assembly, monomer.

The protein localises to the cytoplasm. It catalyses the reaction tRNA(Val) + L-valine + ATP = L-valyl-tRNA(Val) + AMP + diphosphate. Catalyzes the attachment of valine to tRNA(Val). As ValRS can inadvertently accommodate and process structurally similar amino acids such as threonine, to avoid such errors, it has a 'posttransfer' editing activity that hydrolyzes mischarged Thr-tRNA(Val) in a tRNA-dependent manner. The polypeptide is Valine--tRNA ligase (Prochlorococcus marinus subsp. pastoris (strain CCMP1986 / NIES-2087 / MED4)).